The chain runs to 862 residues: MERAESSSTEPAKAIKPIDRKSVHQICSGQVVLSLSTAVKELVENSLDAGATNIDLKLKDYGVDLIEVSDNGCGVEEENFEGLTLKHHTSKIQEFADLTQVETFGFRGEALSSLCALSDVTISTCHASAKVGTRLMFDHNGKIIQKTPYPRPRGTTVSVQQLFSTLPVRHKEFQRNIKKEYAKMVQVLHAYCIISAGIRVSCTNQLGQGKRQPVVCTGGSPSIKENIGSVFGQKQLQSLIPFVQLPPSDSVCEEYGLSCSDALHNLFYISGFISQCTHGVGRSSTDRQFFFINRRPCDPAKVCRLVNEVYHMYNRHQYPFVVLNISVDSECVDINVTPDKRQILLQEEKLLLAVLKTSLIGMFDSDVNKLNVSQQPLLDVEGNLIKMHAADLEKPMVEKQDQSPSLRTGEEKKDVSISRLREAFSLRHTTENKPHSPKTPEPRRSPLGQKRGMLSSSTSGAISDKGVLRPQKEAVSSSHGPSDPTDRAEVEKDSGHGSTSVDSEGFSIPDTGSHCSSEYAASSPGDRGSQEHVDSQEKAPKTDDSFSDVDCHSNQEDTGCKFRVLPQPTNLATPNTKRFKKEEILSSSDICQKLVNTQDMSASQVDVAVKINKKVVPLDFSMSSLAKRIKQLHHEAQQSEGEQNYRKFRAKICPGENQAAEDELRKEISKTMFAEMEIIGQFNLGFIITKLNEDIFIVDQHATDEKYNFEMLQQHTVLQGQRLIAPQTLNLTAVNEAVLIENLEIFRKNGFDFVIDENAPVTERAKLISLPTSKNWTFGPQDVDELIFMLSDSPGVMCRPSRVKQMFASRACRKSVMIGTALNTSEMKKLITHMGEMDHPWNCPHGRPTMRHIANLGVISQN.

The ATP site is built by Asn45, Asp70, Glu109, Ala110, and Leu111. Basic and acidic residues-rich tracts occupy residues 391–401 (DLEKPMVEKQD), 408–444 (TGEE…EPRR), 484–495 (PTDRAEVEKDSG), and 528–552 (GSQE…VDCH). Residues 391–552 (DLEKPMVEKQ…DDSFSDVDCH (162 aa)) are disordered. Thr573 is modified (phosphothreonine). The Nuclear localization signal signature appears at 577 to 580 (KRFK). Residue Thr597 is modified to Phosphothreonine.

The protein belongs to the DNA mismatch repair MutL/HexB family. Heterodimer of PMS2 and MLH1 (MutL alpha); this interaction is required for the stability of both partners. Forms a ternary complex with MutS alpha (MSH2-MSH6) or MutS beta (MSH2-MSH3). Part of the BRCA1-associated genome surveillance complex (BASC), which contains BRCA1, MSH2, MSH6, MLH1, ATM, BLM, PMS2 and the RAD50-MRE11-NBS1 protein complex. This association could be a dynamic process changing throughout the cell cycle and within subnuclear domains. Interacts with MTMR15/FAN1.

It is found in the nucleus. It catalyses the reaction ATP + H2O = ADP + phosphate + H(+). Its function is as follows. Component of the post-replicative DNA mismatch repair system (MMR). Heterodimerizes with MLH1 to form MutL alpha. DNA repair is initiated by MutS alpha (MSH2-MSH6) or MutS beta (MSH2-MSH3) binding to a dsDNA mismatch, then MutL alpha is recruited to the heteroduplex. Assembly of the MutL-MutS-heteroduplex ternary complex in presence of RFC and PCNA is sufficient to activate endonuclease activity of PMS2. It introduces single-strand breaks near the mismatch and thus generates new entry points for the exonuclease EXO1 to degrade the strand containing the mismatch. DNA methylation would prevent cleavage and therefore assure that only the newly mutated DNA strand is going to be corrected. MutL alpha (MLH1-PMS2) interacts physically with the clamp loader subunits of DNA polymerase III, suggesting that it may play a role to recruit the DNA polymerase III to the site of the MMR. Also implicated in DNA damage signaling, a process which induces cell cycle arrest and can lead to apoptosis in case of major DNA damages. Possesses an ATPase activity, but in the absence of gross structural changes, ATP hydrolysis may not be necessary for proficient mismatch repair. This Homo sapiens (Human) protein is Mismatch repair endonuclease PMS2.